Consider the following 132-residue polypeptide: Capsid protein (132 aa).

This sequence belongs to the Leviviricetes capsid protein family. In terms of assembly, homodimer. The capsid protein dimer binds to the viral RNA via an operator hairpin, but also many other RNA sequences in the viral genome.

It localises to the virion. Functionally, capsid protein self-assembles to form an icosahedral capsid with a T=3 symmetry, about 26 nm in diameter, and consisting of 89 capsid proteins dimers (178 capsid proteins). Involved in viral genome encapsidation through the interaction between a capsid protein dimer and the multiple packaging signals present in the RNA genome. Binding of the capsid proteins to the viral RNA induces a conformational change required for efficient T=3 shell formation. The capsid also contains 1 copy of the A2 maturation protein. Its function is as follows. Acts as a translational repressor of viral replicase synthesis late in infection. This latter function is the result of capsid protein interaction with an RNA hairpin which contains the replicase ribosome-binding site. The polypeptide is Capsid protein (Enterobacteria phage SP (Bacteriophage SP)).